Consider the following 502-residue polypeptide: Aspartyl/glutamyl-tRNA(Asn/Gln) amidotransferase subunit B (502 aa).

Residues 272–293 are disordered; sequence TRHWHEDTRSTTSGRPKSDADD.

This sequence belongs to the GatB/GatE family. GatB subfamily. Heterotrimer of A, B and C subunits.

The catalysed reaction is L-glutamyl-tRNA(Gln) + L-glutamine + ATP + H2O = L-glutaminyl-tRNA(Gln) + L-glutamate + ADP + phosphate + H(+). The enzyme catalyses L-aspartyl-tRNA(Asn) + L-glutamine + ATP + H2O = L-asparaginyl-tRNA(Asn) + L-glutamate + ADP + phosphate + 2 H(+). In terms of biological role, allows the formation of correctly charged Asn-tRNA(Asn) or Gln-tRNA(Gln) through the transamidation of misacylated Asp-tRNA(Asn) or Glu-tRNA(Gln) in organisms which lack either or both of asparaginyl-tRNA or glutaminyl-tRNA synthetases. The reaction takes place in the presence of glutamine and ATP through an activated phospho-Asp-tRNA(Asn) or phospho-Glu-tRNA(Gln). The chain is Aspartyl/glutamyl-tRNA(Asn/Gln) amidotransferase subunit B from Paenarthrobacter aurescens (strain TC1).